Consider the following 292-residue polypeptide: ATP synthase subunit a (292 aa).

The next 6 helical transmembrane spans lie at 37-57, 96-116, 144-164, 192-212, 230-250, and 263-283; these read IDSVVVGLVLGAIALFAFWLC, FIAPLALTVFVWIFLMNAMDM, VVPTADLSTTLGLSTAVLVLC, PVFALILGVVNLLMQIIEYVA, LVFMLIALMGGAAAMSLSGVL, and AIFHILVITLQAFIFMMLALI.

The protein belongs to the ATPase A chain family. As to quaternary structure, F-type ATPases have 2 components, CF(1) - the catalytic core - and CF(0) - the membrane proton channel. CF(1) has five subunits: alpha(3), beta(3), gamma(1), delta(1), epsilon(1). CF(0) has three main subunits: a(1), b(2) and c(9-12). The alpha and beta chains form an alternating ring which encloses part of the gamma chain. CF(1) is attached to CF(0) by a central stalk formed by the gamma and epsilon chains, while a peripheral stalk is formed by the delta and b chains.

Its subcellular location is the cell inner membrane. Its function is as follows. Key component of the proton channel; it plays a direct role in the translocation of protons across the membrane. This is ATP synthase subunit a from Paracidovorax citrulli (strain AAC00-1) (Acidovorax citrulli).